A 488-amino-acid polypeptide reads, in one-letter code: Probable glycine dehydrogenase (decarboxylating) subunit 2 (488 aa).

Lysine 274 is subject to N6-(pyridoxal phosphate)lysine.

It belongs to the GcvP family. C-terminal subunit subfamily. In terms of assembly, the glycine cleavage system is composed of four proteins: P, T, L and H. In this organism, the P 'protein' is a heterodimer of two subunits. The cofactor is pyridoxal 5'-phosphate.

The catalysed reaction is N(6)-[(R)-lipoyl]-L-lysyl-[glycine-cleavage complex H protein] + glycine + H(+) = N(6)-[(R)-S(8)-aminomethyldihydrolipoyl]-L-lysyl-[glycine-cleavage complex H protein] + CO2. Functionally, the glycine cleavage system catalyzes the degradation of glycine. The P protein binds the alpha-amino group of glycine through its pyridoxal phosphate cofactor; CO(2) is released and the remaining methylamine moiety is then transferred to the lipoamide cofactor of the H protein. This is Probable glycine dehydrogenase (decarboxylating) subunit 2 from Listeria monocytogenes serotype 4a (strain HCC23).